The following is a 331-amino-acid chain: Phenol 2-monooxygenase, oxygenase component DmpL (331 aa).

The protein belongs to the TmoE/XamoE family. In terms of assembly, the multicomponent enzyme phenol hydroxylase is formed by DmpL (P1 component), DmpM (P2 component), DmpN (P3 component), DmpO (P4 component) and DmpP (P5 component). The oxygenase component is a dimer composed of three subunits, DmpL, DmpN and DmpO (DmpLNO). DmpL interacts with the auxiliary protein DmpK (P0 component).

The catalysed reaction is phenol + NADH + O2 + H(+) = catechol + NAD(+) + H2O. The protein operates within aromatic compound metabolism; phenol degradation. With respect to regulation, requires DmpM for efficient turnover. The activity of DmpLNO oxygenase is inhibited by dithiothreitol (DTT) by a mechanism apparently involving H(2)O(2) generation. Its function is as follows. Part of a multicomponent enzyme which catalyzes the degradation of phenol and some of its methylated derivatives. DmpL, DmpN and DmpO form the oxygenase component of the complex. Required for growth on phenol and for in vitro phenol hydroxylase activity. In Pseudomonas sp. (strain CF600), this protein is Phenol 2-monooxygenase, oxygenase component DmpL.